The primary structure comprises 185 residues: Ribosome-recycling factor (185 aa).

This sequence belongs to the RRF family.

It is found in the cytoplasm. Its function is as follows. Responsible for the release of ribosomes from messenger RNA at the termination of protein biosynthesis. May increase the efficiency of translation by recycling ribosomes from one round of translation to another. This chain is Ribosome-recycling factor, found in Xanthomonas campestris pv. campestris (strain 8004).